The primary structure comprises 271 residues: MEAEGLGWLLVPLHQLVSWVAAGAMVFGGVVPYIPQYRDIRRTQNADGFSTHVCLVLLVANILRILFWFGRHFESPLLWQSIVMILTMLLMLKLCTEVRVANELNIKRRSFAATDSKDEELRVPPRRPYLDFDPHHFWHWSSFSDYVQCVLAFTGVAGYITYLSIDSALFVETLGFLAVLTEAMLGVPQLYRNYCHRSTEGMSLKMVLMWTSGDTFKTAYFLLNGAPLQFSVCGLLQVMVDLVILGQAYAFAHHPQKPAAHAVHPASTKAL.

A run of 3 helical transmembrane segments spans residues 7–27 (GWLLVPLHQLVSWVAAGAMVF), 49–69 (FSTHVCLVLLVANILRILFWF), and 72–92 (HFESPLLWQSIVMILTMLLML). The PQ-loop 1 domain maps to 14–80 (HQLVSWVAAG…RHFESPLLWQ (67 aa)). Serine 110 is modified (phosphoserine). 3 helical membrane passes run 145 to 165 (DYVQCVLAFTGVAGYITYLSI), 168 to 188 (ALFVETLGFLAVLTEAMLGVP), and 232 to 252 (VCGLLQVMVDLVILGQAYAFA). The PQ-loop 2 domain occupies 178 to 233 (AVLTEAMLGVPQLYRNYCHRSTEGMSLKMVLMWTSGDTFKTAYFLLNGAPLQFSVC).

The protein localises to the membrane. The protein is Solute carrier family 66 member 2 (Slc66a2) of Mus musculus (Mouse).